Consider the following 153-residue polypeptide: Putative pre-16S rRNA nuclease (153 aa).

The protein belongs to the YqgF nuclease family.

The protein resides in the cytoplasm. Functionally, could be a nuclease involved in processing of the 5'-end of pre-16S rRNA. The sequence is that of Putative pre-16S rRNA nuclease from Prochlorococcus marinus (strain MIT 9301).